Reading from the N-terminus, the 579-residue chain is Potassium-transporting ATPase potassium-binding subunit (579 aa).

A run of 10 helical transmembrane segments spans residues 2-22 (MNLV…AIPL), 66-86 (SFSV…IHIF), 135-155 (GLTV…FALI), 177-197 (VLYI…SQGV), 262-282 (LSNL…CFTF), 292-312 (GIAI…IIGV), 391-411 (VFGG…LAVF), 437-457 (VLVC…ASIL), 490-510 (FAGF…SMLF), and 546-566 (FIGL…FPAL).

Belongs to the KdpA family. The system is composed of three essential subunits: KdpA, KdpB and KdpC.

The protein resides in the cell membrane. Functionally, part of the high-affinity ATP-driven potassium transport (or Kdp) system, which catalyzes the hydrolysis of ATP coupled with the electrogenic transport of potassium into the cytoplasm. This subunit binds the extracellular potassium ions and delivers the ions to the membrane domain of KdpB through an intramembrane tunnel. In Clostridium botulinum (strain Alaska E43 / Type E3), this protein is Potassium-transporting ATPase potassium-binding subunit.